The primary structure comprises 2278 residues: MRGHQFKSWIFELREILREIKNSHHFLDSWTQFNSVGSFIHIFFHQERFLKLFDPRIWSILLSRNSQGSTSNRYFTIKGVILFVVAVLIYRINNRNMVERKNLYLIGLLPIPMNSIGPRNDTLEESVGSSNINRLIVSLLYLPKGKKISESCFLNPKESTWVLPITKKCSMPESNWGSRWWRNWIGKKRDSSCKISNETVAGIEILFKEKDLKYLEFLFVYYMDDPIRKDHDWELFDRLSLRKSRNRINLNSGLLFEILVKHWISYLMSAFREKIPIEVEGFFKQQGAGSTIQSNDIEHVSHLFSRNKWAISLQNCAQFHMWQFRQDLFVSWGKNPPESDFLRNVSRENWIWLDNVWLVNKDRFFSKVQNVSSNIQYDSTRSSFVQVTDSSQLKGSSDQSRDHLDSISNEDSEYHTLINQREIQQRKERSILWDPSFLQTERKEIESGRFPKCLSGYSSMSRLFTEREKQMINHLFPEEIEEFLGNPTRSVRSFFSDRWSELHLGSNPTERSTRDQKLLKKQQDLSFVPSRRSEKKEMVNIFKIITYLQNTVSIHPISSDPGCDMVPKDEPDMDSSNKISFLNKNPFFDLFHLFHDRNRGGYTLHYDFASEERFQEMADLFTLSITEPDLVYHKGFAFSIDSCGLDQKQFLNEARDESKKKSLLVLPPIFYEENESFSRRIRKKWVRISCGNDLEDPKPKIVVFASNNIMEAVTQYRLIRNLIQIQYSTYGYIRNVLNRFFLMNRSDRNFEYGIQRDQIGKDTLNHRTIMKYTINQYLSNLKKSQKKWFEPLILISRTERSMNRDPDAYRYKWSNGSKSFQEHLEQSVSEQKSRFQVVFDRLRINQYSIDWSEVIDKKDLSKSLRFFLSKSLLFLSKLLLFLSNSLPFFCVSFGNIPIHRSEIYIYEELKGPNDQLCNQLLESIGLQIVHLKKLKPFLLDDHDTSQKSKFLINGGTISPFLFNKIPKWMIDSFHTRNNRRKSFDNPDSYFSMIFHDQDNWLNPVKPFHRSSLISSFYKANRLRFLNNPHHFCFYWNTRFPFSVEKARINNSDFTYGQFLNILFIRNKIFSLCVGKKKHAFWGRDTISPIESQVSNIFIPNDFPQSGDETYNLYKSFHFPSRSDPFVRRAIYSIADISGTPLTEGQIVNFERTYCQPLSDMNLSDSEGKNLHQYLNFNSNMGLIHTPCSEKDLSSEKRKKWSLCLKKCVEKGQMYRTFQRDSAFSTLSKWNLFQTYMPWFLTSTGYKYLNLIFLDTFSDLLPILSSSQKFVSIFPDIMHGSGISWRILQKKLCLPQWNLISEISSKCLHNLLLSEEMIHRNNESPLISTHLRSPNAREFLYSILFLLLVAGYLVRTHLLFVSRASSELQTEFEKVKSLMIPSSMIELRKLLDRYPTSEPNSFWLKNLFLVALEQLGDSLEEIRGSASGGNMLGPAYGVKSIRSKKKDWNINLIEIIDLIPNPINRITFSRNTRHLSHTSKEIYSLIRKRKNVNGDWIDEKIESWVANSDSIDDEEREFLVQFSTLTTENRIDQILLSLTHSDHLSKNDSGYQMIEQPGAIYLRYLVDIHKKHLMNYEFNPSCLAERRIFLAHYQTITYSQTSCGENSFHFPSPGKPFSLRLALSPSRGILVIGSIGTGRSYLVKYLATNSYVPFITVFLNKFLDNKSKGFLLDEIDIDDSDDIDDSDNLDASDDIDRDLDTELELLTRMNGLTVDMMPEIDRFYITLQFELAKAMSPCIIWIPNIHDLDVNESNDLSLGLLVNHLSRDCERCSTRNILVIASTHIPQKVDPALIAPNKLNTCIKIRRLLIPQQRKHFFTLSYTRGFHLEKKMFHTNGFGSITMGSNARDLVALTNEVLSISITQKKSIIDTNTIRSALHRQTWDLRSQVRSVQDHGILFYQIGRAVAQNVLLSNCPIDPISIYMKKKSCNEGDSYLYKWYFELGTSMKRLTILLYLLSCSAGSVAQDLWSLSVPDEKNGITSYGLVENDSDLVHGLLEVEGALVGSSRTEKDCSQFDNDRVTLLLRPEPRNPLDMMQKGSWSILDQRFLYEKYESEFEEGEGEGALDPQEDLFNHIVWAPRIWRPWGFLFDCIERPNELGFPYWSRSFRGKRIIYDEEDELQENDSGFLQSGTMQYQTRDRSQGLFRISQFIWDPADPLFFLFKDQPPGSVFSHRELFADEEMSKGLLTSQTDPPTSIYKRWFIKNTQEKHFELLINRQRWLRTNSSLSNGSFRSNTLSESYQYLSNLFLSNGTLLDQMPKTLLRKRWLFPDEMKIGFM.

1632-1639 (GSIGTGRS) contributes to the ATP binding site.

The protein belongs to the Ycf2 family.

Its subcellular location is the plastid. The protein resides in the chloroplast stroma. Probable ATPase of unknown function. Its presence in a non-photosynthetic plant (Epifagus virginiana) and experiments in tobacco indicate that it has an essential function which is probably not related to photosynthesis. The sequence is that of Protein Ycf2 from Solanum bulbocastanum (Wild potato).